The chain runs to 359 residues: Guanine nucleotide-binding protein subunit alpha-11 (359 aa).

S-palmitoyl cysteine attachment occurs at residues Cys9 and Cys10. The region spanning 38 to 359 (RELKLLLLGT…QLNLKEYNLV (322 aa)) is the G-alpha domain. Positions 41–54 (KLLLLGTGESGKST) are G1 motif. GTP contacts are provided by residues 46-53 (GTGESGKS) and 180-183 (LRVR). Ser53 is a binding site for Mg(2+). The segment at 178 to 186 (DVLRVRVPT) is G2 motif. Thr186 is a binding site for Mg(2+). The G3 motif stretch occupies residues 201–210 (FRMVDVGGQR). Residues 270-277 (ILFLNKKD) are G4 motif. GTP is bound by residues 274 to 277 (NKKD) and Ala331. The segment at 329-334 (TCATDT) is G5 motif.

The protein belongs to the G-alpha family. G(q) subfamily. G proteins are composed of 3 units; alpha, beta and gamma. The alpha chain contains the guanine nucleotide binding site. Interacts with RGS22. Interacts with NTSR1.

Its subcellular location is the cell membrane. The protein localises to the cytoplasm. The catalysed reaction is GTP + H2O = GDP + phosphate + H(+). In terms of biological role, guanine nucleotide-binding proteins (G proteins) function as transducers downstream of G protein-coupled receptors (GPCRs) in numerous signaling cascades. The alpha chain contains the guanine nucleotide binding site and alternates between an active, GTP-bound state and an inactive, GDP-bound state. Signaling by an activated GPCR promotes GDP release and GTP binding. The alpha subunit has a low GTPase activity that converts bound GTP to GDP, thereby terminating the signal. Both GDP release and GTP hydrolysis are modulated by numerous regulatory proteins. Signaling is mediated via phospholipase C-beta-dependent inositol lipid hydrolysis for signal propagation: activates phospholipase C-beta: following GPCR activation, GNA11 activates PLC-beta (PLCB1, PLCB2, PLCB3 or PLCB4), leading to production of diacylglycerol (DAG) and inositol 1,4,5-trisphosphate (IP3). Transduces FFAR4 signaling in response to long-chain fatty acids (LCFAs). Together with GNAQ, required for heart development. In the respiratory epithelium, transmits OXGR1-dependent signals that lead to downstream intracellular Ca(2+) release and mucocilliary clearance of airborne pathogens. In Mus musculus (Mouse), this protein is Guanine nucleotide-binding protein subunit alpha-11 (Gna11).